A 788-amino-acid chain; its full sequence is E3 ubiquitin-protein ligase SspH2 (788 aa).

Residues 1–481 are interaction with host membrane and with target proteins; the sequence is MPFHIGSGCL…PGYSGPIIRF (481 aa). 12 LRR repeats span residues 223 to 242, 243 to 264, 265 to 282, 283 to 302, 303 to 324, 325 to 342, 343 to 364, 365 to 382, 383 to 404, 405 to 422, 423 to 445, and 446 to 466; these read HITT…ALPP, ELRT…PPGL, LELS…ALPS, GLCK…VLPP, GLQE…PSEL, CKLW…MLPS, YKLW…ALPS, GLKE…PSEL, KELM…MLPS, GLLS…IHLS, and SETT…QALR. A linker region spans residues 482 to 491; that stretch reads DMAGASAPRE. The tract at residues 492-788 is E3 ubiquitin-protein ligase catalytic domain; it reads TRALHLAAAD…SYLNVQWRRN (297 aa). The NEL domain occupies 494–788; sequence ALHLAAADWL…SYLNVQWRRN (295 aa). Cys580 functions as the Glycyl thioester intermediate in the catalytic mechanism.

It belongs to the LRR-containing bacterial E3 ligase family. In terms of processing, ubiquitinated in the presence of host E1 ubiquitin-activating enzyme UBA1, E2 ubiquitin-conjugating enzyme UBE2D2 and ubiquitin.

Its subcellular location is the secreted. It localises to the host cytoplasm. The protein localises to the host apical cell membrane. The enzyme catalyses S-ubiquitinyl-[E2 ubiquitin-conjugating enzyme]-L-cysteine + [acceptor protein]-L-lysine = [E2 ubiquitin-conjugating enzyme]-L-cysteine + N(6)-ubiquitinyl-[acceptor protein]-L-lysine.. With respect to regulation, exists in an autoinhibited state in the absence of substrate protein, due to interactions of the leucine-rich repeat domain with the catalytic domain. Is activated upon binding to a substrate protein. In terms of biological role, effector proteins function to alter host cell physiology and promote bacterial survival in host tissues. This protein is an E3 ubiquitin ligase that interferes with host's ubiquitination pathway. This chain is E3 ubiquitin-protein ligase SspH2 (sspH2), found in Salmonella typhimurium (strain LT2 / SGSC1412 / ATCC 700720).